The chain runs to 214 residues: Thiamine-phosphate synthase (214 aa).

4-amino-2-methyl-5-(diphosphooxymethyl)pyrimidine contacts are provided by residues 37–41 (QYREK) and N73. Positions 74 and 93 each coordinate Mg(2+). Residue S112 coordinates 4-amino-2-methyl-5-(diphosphooxymethyl)pyrimidine. A 2-[(2R,5Z)-2-carboxy-4-methylthiazol-5(2H)-ylidene]ethyl phosphate-binding site is contributed by 139-141 (TIS). K142 contacts 4-amino-2-methyl-5-(diphosphooxymethyl)pyrimidine. 2-[(2R,5Z)-2-carboxy-4-methylthiazol-5(2H)-ylidene]ethyl phosphate contacts are provided by residues G171 and 191 to 192 (IS).

This sequence belongs to the thiamine-phosphate synthase family. Mg(2+) is required as a cofactor.

The enzyme catalyses 2-[(2R,5Z)-2-carboxy-4-methylthiazol-5(2H)-ylidene]ethyl phosphate + 4-amino-2-methyl-5-(diphosphooxymethyl)pyrimidine + 2 H(+) = thiamine phosphate + CO2 + diphosphate. It catalyses the reaction 2-(2-carboxy-4-methylthiazol-5-yl)ethyl phosphate + 4-amino-2-methyl-5-(diphosphooxymethyl)pyrimidine + 2 H(+) = thiamine phosphate + CO2 + diphosphate. It carries out the reaction 4-methyl-5-(2-phosphooxyethyl)-thiazole + 4-amino-2-methyl-5-(diphosphooxymethyl)pyrimidine + H(+) = thiamine phosphate + diphosphate. It functions in the pathway cofactor biosynthesis; thiamine diphosphate biosynthesis; thiamine phosphate from 4-amino-2-methyl-5-diphosphomethylpyrimidine and 4-methyl-5-(2-phosphoethyl)-thiazole: step 1/1. Functionally, condenses 4-methyl-5-(beta-hydroxyethyl)thiazole monophosphate (THZ-P) and 2-methyl-4-amino-5-hydroxymethyl pyrimidine pyrophosphate (HMP-PP) to form thiamine monophosphate (TMP). The polypeptide is Thiamine-phosphate synthase (Listeria monocytogenes serotype 4b (strain CLIP80459)).